We begin with the raw amino-acid sequence, 242 residues long: Glucosamine-6-phosphate deaminase (242 aa).

Aspartate 71 acts as the Proton acceptor; for enolization step in catalysis. Asparagine 142 (for ring-opening step) is an active-site residue. The active-site Proton acceptor; for ring-opening step is histidine 144. Glutamate 149 (for ring-opening step) is an active-site residue.

This sequence belongs to the glucosamine/galactosamine-6-phosphate isomerase family. NagB subfamily.

It catalyses the reaction alpha-D-glucosamine 6-phosphate + H2O = beta-D-fructose 6-phosphate + NH4(+). It participates in amino-sugar metabolism; N-acetylneuraminate degradation; D-fructose 6-phosphate from N-acetylneuraminate: step 5/5. Catalyzes the reversible isomerization-deamination of glucosamine 6-phosphate (GlcN6P) to form fructose 6-phosphate (Fru6P) and ammonium ion. The polypeptide is Glucosamine-6-phosphate deaminase (Malacoplasma penetrans (strain HF-2) (Mycoplasma penetrans)).